The primary structure comprises 609 residues: Nuclear factor 7, brain (609 aa).

In terms of domain architecture, Tudor-knot spans 21–75; the sequence is NVGSTYPCKRSDGSQHDAEIVKVRYNKQAGREEYYAHYVGLNRRQNEWVDKSRLV. Residues 74–84 are compositionally biased toward basic and acidic residues; it reads LVLTKPPKEGE. Residues 74–129 are disordered; sequence LVLTKPPKEGETNGTDQEVTDTAEQPDSKTPQKRKIEEPEPEPKKAKVEEKDASKN. Positions 85–102 are enriched in polar residues; it reads TNGTDQEVTDTAEQPDSK. Position 103 is a phosphothreonine; by CDK1 (T103). Positions 107-127 are enriched in basic and acidic residues; the sequence is RKIEEPEPEPKKAKVEEKDAS. Residues 145-185 form an RING-type zinc finger; it reads CPLCVELFKDPVMVACGHNFCRSCIDKAWEGQSSFACPECR. A B box-type zinc finger spans residues 219–260; it reads RPLEKCSEHDERLKLYCKDDGTLSCVICRDSLKHASHNFLPI. The Zn(2+) site is built by C224, H227, C246, and H252. Residues 278-371 adopt a coiled-coil conformation; that stretch reads LEASLKVTEQ…SLAKERMEDT (94 aa). The B30.2/SPRY domain maps to 413-609; it reads GPIQYIMWKE…VDPLRFVHNK (197 aa).

As to quaternary structure, monomer. Threonine (predominantly) and serine residues are phosphorylated during oocyte maturation, when CDK1 is active. At the neurula stage, high expression in dorsal embryo region including neural folds and somites. Also high expression in adult brain (CNS) and low expression in oocytes.

Its subcellular location is the nucleus. In terms of biological role, transcription factor that determines dorsal-ventral body axis. This Xenopus laevis (African clawed frog) protein is Nuclear factor 7, brain.